A 471-amino-acid polypeptide reads, in one-letter code: Serine hydroxymethyltransferase, cytosolic (471 aa).

N6-(pyridoxal phosphate)lysine is present on Lys-249.

This sequence belongs to the SHMT family. Pyridoxal 5'-phosphate serves as cofactor.

The protein localises to the cytoplasm. It is found in the cytosol. The catalysed reaction is (6R)-5,10-methylene-5,6,7,8-tetrahydrofolate + glycine + H2O = (6S)-5,6,7,8-tetrahydrofolate + L-serine. It functions in the pathway one-carbon metabolism; tetrahydrofolate interconversion. Catalyzes the interconversion of serine and glycine. Essential for viability and required for virulence in a murine model of established pulmonary infection. In Aspergillus fumigatus (strain ATCC MYA-4609 / CBS 101355 / FGSC A1100 / Af293) (Neosartorya fumigata), this protein is Serine hydroxymethyltransferase, cytosolic.